A 502-amino-acid polypeptide reads, in one-letter code: Probable glycine dehydrogenase (decarboxylating) subunit 2 (502 aa).

K273 bears the N6-(pyridoxal phosphate)lysine mark.

This sequence belongs to the GcvP family. C-terminal subunit subfamily. As to quaternary structure, the glycine cleavage system is composed of four proteins: P, T, L and H. In this organism, the P 'protein' is a heterodimer of two subunits. Requires pyridoxal 5'-phosphate as cofactor.

The catalysed reaction is N(6)-[(R)-lipoyl]-L-lysyl-[glycine-cleavage complex H protein] + glycine + H(+) = N(6)-[(R)-S(8)-aminomethyldihydrolipoyl]-L-lysyl-[glycine-cleavage complex H protein] + CO2. The glycine cleavage system catalyzes the degradation of glycine. The P protein binds the alpha-amino group of glycine through its pyridoxal phosphate cofactor; CO(2) is released and the remaining methylamine moiety is then transferred to the lipoamide cofactor of the H protein. In Pyrococcus abyssi (strain GE5 / Orsay), this protein is Probable glycine dehydrogenase (decarboxylating) subunit 2.